We begin with the raw amino-acid sequence, 54 residues long: Large ribosomal subunit protein bL33 (54 aa).

The protein belongs to the bacterial ribosomal protein bL33 family.

The protein is Large ribosomal subunit protein bL33 of Herpetosiphon aurantiacus (strain ATCC 23779 / DSM 785 / 114-95).